The following is a 529-amino-acid chain: ADP,ATP carrier protein 1 (529 aa).

12 consecutive transmembrane segments (helical) span residues 24 to 44, 63 to 83, 93 to 113, 124 to 144, 149 to 169, 184 to 204, 220 to 240, 284 to 304, 322 to 342, 356 to 376, 381 to 401, and 463 to 483; these read LKKV…YTIL, IPFI…LIYA, ALFY…PLVI, DFAD…IAML, FAAF…LMFW, FYAL…PAIV, WGVT…IIAA, YMLL…LVEV, AFMG…MLFI, ALVT…LVIF, TGLV…VGAV, and ISAM…VWLT. Residues 509–520 show a composition bias toward low complexity; it reads AAEKEASPAAKE. The tract at residues 509–529 is disordered; that stretch reads AAEKEASPAAKEVSPAIEGVS.

It belongs to the ADP/ATP translocase tlc family.

Its subcellular location is the cell membrane. The protein is ADP,ATP carrier protein 1 (tlcA) of Chlamydia muridarum (strain MoPn / Nigg).